The following is a 251-amino-acid chain: Adenosylcobinamide-GDP ribazoletransferase (251 aa).

6 consecutive transmembrane segments (helical) span residues 36–56 (LYPF…FVLS), 60–80 (VPIM…TGFL), 110–130 (VGAF…AGIF), 181–201 (EIIL…TLGI), 202–222 (NYLI…LKVK), and 231–251 (DVAG…LGII).

The protein belongs to the CobS family. Mg(2+) is required as a cofactor.

The protein localises to the cell membrane. The catalysed reaction is alpha-ribazole + adenosylcob(III)inamide-GDP = adenosylcob(III)alamin + GMP + H(+). It catalyses the reaction alpha-ribazole 5'-phosphate + adenosylcob(III)inamide-GDP = adenosylcob(III)alamin 5'-phosphate + GMP + H(+). The protein operates within cofactor biosynthesis; adenosylcobalamin biosynthesis; adenosylcobalamin from cob(II)yrinate a,c-diamide: step 7/7. In terms of biological role, joins adenosylcobinamide-GDP and alpha-ribazole to generate adenosylcobalamin (Ado-cobalamin). Also synthesizes adenosylcobalamin 5'-phosphate from adenosylcobinamide-GDP and alpha-ribazole 5'-phosphate. The polypeptide is Adenosylcobinamide-GDP ribazoletransferase (Clostridium perfringens (strain SM101 / Type A)).